The following is a 434-amino-acid chain: MSHLDDIPSTPGKFKMMDKSPFFLHRTRWQSSVAKLAFWSLVFFGLLFIFFYRSPISNPDSSRRSLRTYSWGGPAWEKRVRSSARVRTRNGVSVLVTGAAGFVGTHVSAALKRRGDGVLGLDNFNDYYDTSLKRSRQALLERSGVFIVEGDINDLSLLKKLFEVVPFTHVMHLAAQAGVRYAMENPGSYVHSNIAGFVNLLEVCKSANPQPAIVWASSSSVYGLNTKVPFSEKDRTDQPASLYAATKKAGEEIAHTYNHIYGLSLTGLRFFTVYGPWGRPDMAYFFFTRDILKGKAISIFEGANHGTVARDFTYIDDIVKGCLGALDTAEKSTGSGGKKRGAAQLRVFNLGNTSPVPVTDLVSILERLLKVKAKRNMMKLPRNGDVPFTHANISSAQREFGYKPSTDLQTGLKKFVRWYLGYYKQGGKKVAAAA.

Transmembrane regions (helical) follow at residues 32-52 (SVAK…IFFY) and 91-111 (GVSV…SAAL). Residue 93 to 124 (SVLVTGAAGFVGTHVSAALKRRGDGVLGLDNF) coordinates NAD(+). Residue tyrosine 243 is the Proton acceptor of the active site.

Belongs to the NAD(P)-dependent epimerase/dehydratase family. In terms of assembly, homodimer. As to expression, in roots, leaves, siliques, flowers, pollen and stems.

It localises to the golgi apparatus. The protein resides in the golgi stack membrane. It carries out the reaction UDP-alpha-D-glucuronate = UDP-alpha-D-galacturonate. Involved in the synthesis of the negatively charged monosaccharide that forms the backbone of pectic cell wall components. This Arabidopsis thaliana (Mouse-ear cress) protein is UDP-glucuronate 4-epimerase 2 (GAE2).